Consider the following 1377-residue polypeptide: DNA-directed RNA polymerase subunit beta (1377 aa).

Belongs to the RNA polymerase beta chain family. The RNAP catalytic core consists of 2 alpha, 1 beta, 1 beta' and 1 omega subunit. When a sigma factor is associated with the core the holoenzyme is formed, which can initiate transcription.

The catalysed reaction is RNA(n) + a ribonucleoside 5'-triphosphate = RNA(n+1) + diphosphate. Its function is as follows. DNA-dependent RNA polymerase catalyzes the transcription of DNA into RNA using the four ribonucleoside triphosphates as substrates. The polypeptide is DNA-directed RNA polymerase subunit beta (Azoarcus sp. (strain BH72)).